Reading from the N-terminus, the 127-residue chain is MAKSLRSKWKRKMRAEKRKKNAPKELSRLKSILKIDGDVLMKDVQEIATVVEPKHCQEKTQCVVKDETDDMKMETDIKRNKKTLLDQHGQYPIWMNQRQRKRLKAKRERKKGKSKVKAMKAAKGLTW.

The segment covering 1 to 21 has biased composition (basic residues); sequence MAKSLRSKWKRKMRAEKRKKN. Positions 1–24 are disordered; the sequence is MAKSLRSKWKRKMRAEKRKKNAPK. Residues Lys-65 and Lys-72 each participate in a glycyl lysine isopeptide (Lys-Gly) (interchain with G-Cter in SUMO2) cross-link. Over residues 98–120 the composition is skewed to basic residues; that stretch reads RQRKRLKAKRERKKGKSKVKAMK. Positions 98 to 127 are disordered; it reads RQRKRLKAKRERKKGKSKVKAMKAAKGLTW.

It belongs to the learning-associated protein family. In terms of assembly, interacts with CTCF, MYO1C and with the transcriptional machinery, including RNA polymerase II and TBP.

It is found in the nucleus. Its subcellular location is the nucleolus. The protein localises to the chromosome. Functionally, in hippocampal neurons, regulates dendritic and spine growth and synaptic transmission. In Bos taurus (Bovine), this protein is Protein LLP homolog (LLPH).